Here is a 587-residue protein sequence, read N- to C-terminus: Aspartate--tRNA ligase (587 aa).

Residue E175 coordinates L-aspartate. Residues Q199–K202 are aspartate. Positions 221 and 446 each coordinate L-aspartate. ATP is bound at residue R221–E223. E480 provides a ligand contact to ATP. Residue R487 coordinates L-aspartate. G532–R535 is an ATP binding site.

The protein belongs to the class-II aminoacyl-tRNA synthetase family. Type 1 subfamily. In terms of assembly, homodimer.

The protein resides in the cytoplasm. The enzyme catalyses tRNA(Asp) + L-aspartate + ATP = L-aspartyl-tRNA(Asp) + AMP + diphosphate. Catalyzes the attachment of L-aspartate to tRNA(Asp) in a two-step reaction: L-aspartate is first activated by ATP to form Asp-AMP and then transferred to the acceptor end of tRNA(Asp). The protein is Aspartate--tRNA ligase of Streptomyces coelicolor (strain ATCC BAA-471 / A3(2) / M145).